The sequence spans 184 residues: Signal peptidase complex subunit 3 (184 aa).

The Cytoplasmic portion of the chain corresponds to 1–14 (MFSFVQRFQNVSNQ). Residues 15-35 (AFSMGIVMVVFIMASSYYQLI) form a helical; Signal-anchor for type II membrane protein membrane-spanning segment. The Lumenal segment spans residues 36–184 (NNNAFSVPSN…TLTVENKNKV (149 aa)). N-linked (GlcNAc...) asparagine glycans are attached at residues Asn102 and Asn173.

It belongs to the SPCS3 family. As to quaternary structure, component of the signal peptidase complex (SPC) composed of a catalytic subunit SEC11 and three accessory subunits SPC1, SPC2 and SPC3. The complex induces a local thinning of the ER membrane which is used to measure the length of the signal peptide (SP) h-region of protein substrates. This ensures the selectivity of the complex towards h-regions shorter than 18-20 amino acids. Interacts with SEC11. SPC associates with the translocon complex.

The protein resides in the endoplasmic reticulum membrane. Functionally, essential component of the signal peptidase complex (SPC) which catalyzes the cleavage of N-terminal signal sequences from nascent proteins as they are translocated into the lumen of the endoplasmic reticulum. Essential for the SPC catalytic activity, possibly by stabilizing and positioning the active center of the complex close to the lumenal surface. Essential for viability. This chain is Signal peptidase complex subunit 3 (SPC3), found in Saccharomyces cerevisiae (strain ATCC 204508 / S288c) (Baker's yeast).